The chain runs to 268 residues: Fatty acid elongase sre1 (268 aa).

7 consecutive transmembrane segments (helical) span residues 31–51 (VFPF…QAIM), 62–82 (FSII…SGVM), 110–130 (IGFW…DTVI), 137–157 (PIIF…WQWL), 161–181 (WLVG…LMYY), 198–218 (ITKA…YWFV), and 227–247 (APLS…ILFG).

Belongs to the ELO family.

The protein resides in the membrane. It catalyses the reaction a very-long-chain acyl-CoA + malonyl-CoA + H(+) = a very-long-chain 3-oxoacyl-CoA + CO2 + CoA. Its function is as follows. Could be implicated in synthesis of very long chain fatty acids. In Dictyostelium discoideum (Social amoeba), this protein is Fatty acid elongase sre1 (sre1).